The following is a 190-amino-acid chain: Cytoplasmic envelopment protein 3 (190 aa).

Residue G2 is the site of N-myristoyl glycine; by host attachment. The disordered stretch occupies residues 27–190 (RQVSLRSYDN…TKKPAASLPF (164 aa)). The segment covering 30-43 (SLRSYDNIPPTSSS) has biased composition (polar residues). The span at 44 to 58 (DEGEDDDDGEDDDNE) shows a compositional bias: acidic residues. The span at 80 to 90 (SHREATHDGSK) shows a compositional bias: basic and acidic residues. Positions 108–123 (KQSKKKKKPSKHHHHQ) are enriched in basic residues. A compositionally biased stretch (acidic residues) spans 130-139 (ETDDLDEEDT).

This sequence belongs to the herpesviridae cytoplasmic envelopment protein 3 family. In terms of assembly, interacts with cytoplasmic envelopment protein 2; this interaction is essential for the proper localization of each protein to the assembly complex and thus for the production of infectious virus. In terms of processing, myristoylation and palmitoylation (probably on one or more of the nearby cysteines at the N-terminus) enable membrane-binding and Golgi apparatus-specific targeting and are essential for efficient packaging. Post-translationally, phosphorylated. Phosphorylation does not seem to be required for recycling to the host Golgi apparatus. Packaging is selective for underphosphorylated forms.

The protein localises to the virion tegument. It localises to the virion membrane. Its subcellular location is the host cell membrane. It is found in the host Golgi apparatus membrane. Functionally, plays an important role in the cytoplasmic envelopment of tegument proteins and capsids during the assembly and egress processes. Also participates in viral entry at the fusion step probably by regulating the core fusion machinery. The protein is Cytoplasmic envelopment protein 3 (UL99) of Human cytomegalovirus (strain AD169) (HHV-5).